Consider the following 264-residue polypeptide: Glutamate racemase (264 aa).

Residues 12-13 (DS) and 44-45 (YG) each bind substrate. Catalysis depends on C75, which acts as the Proton donor/acceptor. Residue 76–77 (NT) participates in substrate binding. The active-site Proton donor/acceptor is C186. Residue 187–188 (TH) participates in substrate binding.

It belongs to the aspartate/glutamate racemases family.

The enzyme catalyses L-glutamate = D-glutamate. It functions in the pathway cell wall biogenesis; peptidoglycan biosynthesis. In terms of biological role, provides the (R)-glutamate required for cell wall biosynthesis. In Stutzerimonas stutzeri (strain A1501) (Pseudomonas stutzeri), this protein is Glutamate racemase.